A 78-amino-acid polypeptide reads, in one-letter code: 4-methyl-3-hydroxyanthranilic acid carrier protein (78 aa).

An O-(pantetheine 4'-phosphoryl)serine modification is found at Ser-33.

The protein belongs to the acyl carrier protein (ACP) family. Post-translationally, 4'-phosphopantetheine is transferred from CoA to a specific serine of the apo-form of this carrier protein.

The protein operates within antibiotic biosynthesis. Functionally, involved in the biosynthesis of actinomycin. Acts as a carrier in the transfer and thioesterification of 4-methyl-3-hydroxyanthranilic acid (4-MHA). The polypeptide is 4-methyl-3-hydroxyanthranilic acid carrier protein (Streptomyces anulatus (Streptomyces chrysomallus)).